The primary structure comprises 268 residues: MEDFFNCLRSRGFERTDEPLPSDSRRIVVHGVGGSGKTSLIEAFAIANEWVRAYTLTSHERFDISGRGISQYKGQPIDEKLWTILDEYGQTDNPETLPPFNVLATDPYQAFRCQPLRAHFVSLRSYRVPHHIAQAITQYTGFPIEAAGTDLHEGKYTVGPWTDKLRQQILVEDGEIHYQLSRRQCPHKLITDAIGEQWPTVTVVFDRSISPESARPLRCLFYIAATRSSNELNIRTYVPTRTPGLIKASLPHTSCRLCCRPRDLPSEN.

Residues 1 to 138 form the (+)RNA virus helicase ATP-binding domain; that stretch reads MEDFFNCLRS…PHHIAQAITQ (138 aa). The (+)RNA virus helicase C-terminal domain occupies 139 to 268; it reads YTGFPIEAAG…CRPRDLPSEN (130 aa).

The protein belongs to the Tymovirales TGBp1 protein family. In terms of assembly, homodimer and homooligomer. Interacts with capsid protein. Interacts with host AGO1; this interaction targets the host protein for degradation, thereby suppressing the antiviral RNA silencing.

It is found in the host cytoplasm. Functionally, transports viral genome to neighboring plant cells directly through plasmosdesmata, without any budding. The movement protein allows efficient cell to cell propagation, by bypassing the host cell wall barrier. Increases plasmodesma size exclusion limit. Acts as a suppressor of RNA-mediated gene silencing, also known as post-transcriptional gene silencing (PTGS), a mechanism of plant viral defense that limits the accumulation of viral RNAs. In Lolium latent virus (isolate Lolium/USA/US1/-) (LoLV), this protein is Movement and silencing protein TGBp1 (ORF2).